The chain runs to 499 residues: FAD-dependent oxidoreductase domain-containing protein 1 (499 aa).

A helical membrane pass occupies residues 75 to 95 (ERADVVIVGGGVMGWSIAYWL).

FAD serves as cofactor.

Its subcellular location is the mitochondrion inner membrane. Required for the assembly of the mitochondrial membrane respiratory chain NADH dehydrogenase (Complex I). Involved in mid-late stages of complex I assembly. This Xenopus laevis (African clawed frog) protein is FAD-dependent oxidoreductase domain-containing protein 1 (foxred1).